A 207-amino-acid polypeptide reads, in one-letter code: LexA repressor (207 aa).

The segment at residues 28–48 is a DNA-binding region (H-T-H motif); the sequence is VREIGEAVGLASSSTVHGHLS. Active-site for autocatalytic cleavage activity residues include Ser130 and Lys168.

The protein belongs to the peptidase S24 family. As to quaternary structure, homodimer.

The enzyme catalyses Hydrolysis of Ala-|-Gly bond in repressor LexA.. Its function is as follows. Represses a number of genes involved in the response to DNA damage (SOS response), including recA and lexA. In the presence of single-stranded DNA, RecA interacts with LexA causing an autocatalytic cleavage which disrupts the DNA-binding part of LexA, leading to derepression of the SOS regulon and eventually DNA repair. The chain is LexA repressor from Staphylococcus aureus (strain MSSA476).